A 549-amino-acid polypeptide reads, in one-letter code: Chaperonin GroEL (549 aa).

Residues 29–32 (TLGP), Lys50, 86–90 (DGTTT), Gly414, 477–479 (NAL), and Asp493 contribute to the ATP site.

This sequence belongs to the chaperonin (HSP60) family. Forms a cylinder of 14 subunits composed of two heptameric rings stacked back-to-back. Interacts with the co-chaperonin GroES.

The protein resides in the cytoplasm. The enzyme catalyses ATP + H2O + a folded polypeptide = ADP + phosphate + an unfolded polypeptide.. Functionally, together with its co-chaperonin GroES, plays an essential role in assisting protein folding. The GroEL-GroES system forms a nano-cage that allows encapsulation of the non-native substrate proteins and provides a physical environment optimized to promote and accelerate protein folding. The protein is Chaperonin GroEL of Leptospira biflexa serovar Patoc (strain Patoc 1 / Ames).